Here is an 81-residue protein sequence, read N- to C-terminus: Prophage excisionase-like protein (81 aa).

It to lambdoid phages excisionases.

The protein is Prophage excisionase-like protein (xisE) of Escherichia coli (strain K12).